The primary structure comprises 386 residues: GTPase Obg (386 aa).

An Obg domain is found at 1 to 159 (MKFIDEARIE…RTLKLELKVL (159 aa)). Residues 160-348 (ADVGLLGMPN…LTFAIMSYLD (189 aa)) form the OBG-type G domain. Residues 166–173 (GMPNAGKS), 191–195 (FTTLH), 213–216 (DIPG), 284–287 (NKVD), and 329–331 (SAL) each bind GTP. 2 residues coordinate Mg(2+): S173 and T193.

This sequence belongs to the TRAFAC class OBG-HflX-like GTPase superfamily. OBG GTPase family. Monomer. Requires Mg(2+) as cofactor.

The protein localises to the cytoplasm. In terms of biological role, an essential GTPase which binds GTP, GDP and possibly (p)ppGpp with moderate affinity, with high nucleotide exchange rates and a fairly low GTP hydrolysis rate. Plays a role in control of the cell cycle, stress response, ribosome biogenesis and in those bacteria that undergo differentiation, in morphogenesis control. In Chromobacterium violaceum (strain ATCC 12472 / DSM 30191 / JCM 1249 / CCUG 213 / NBRC 12614 / NCIMB 9131 / NCTC 9757 / MK), this protein is GTPase Obg.